A 127-amino-acid polypeptide reads, in one-letter code: ALK and LTK ligand 1 (127 aa).

The first 27 residues, 1-27 (MWLTKPSTPVSALLLLALALSPPGTQG), serve as a signal peptide directing secretion. Intrachain disulfides connect Cys-88–Cys-124 and Cys-102–Cys-111.

Belongs to the ALKAL family.

Its subcellular location is the secreted. The protein resides in the cell membrane. Cytokine that acts as a physiological ligand for receptor tyrosine kinase LTK, leading to its activation. Monomeric ALKAL1 binds to LTK, leading to LTK homodimerization and activation. In contrast to ALKAL2, does not act as a potent physiological ligand for ALK. The chain is ALK and LTK ligand 1 from Mus musculus (Mouse).